The chain runs to 129 residues: Phosphoribosyl-AMP cyclohydrolase (129 aa).

Mg(2+) is bound at residue Asp76. Cys77 provides a ligand contact to Zn(2+). The Mg(2+) site is built by Asp78 and Asp80. Residues Cys97 and Cys104 each coordinate Zn(2+).

This sequence belongs to the PRA-CH family. Homodimer. The cofactor is Mg(2+). Requires Zn(2+) as cofactor.

It is found in the cytoplasm. The catalysed reaction is 1-(5-phospho-beta-D-ribosyl)-5'-AMP + H2O = 1-(5-phospho-beta-D-ribosyl)-5-[(5-phospho-beta-D-ribosylamino)methylideneamino]imidazole-4-carboxamide. It participates in amino-acid biosynthesis; L-histidine biosynthesis; L-histidine from 5-phospho-alpha-D-ribose 1-diphosphate: step 3/9. Its function is as follows. Catalyzes the hydrolysis of the adenine ring of phosphoribosyl-AMP. This Polaromonas naphthalenivorans (strain CJ2) protein is Phosphoribosyl-AMP cyclohydrolase.